We begin with the raw amino-acid sequence, 31 residues long: Photosystem II reaction center protein M (31 aa).

A helical transmembrane segment spans residues 5 to 25 (ILAFIATALLILVPTAFLLII).

This sequence belongs to the PsbM family. In terms of assembly, PSII is composed of 1 copy each of membrane proteins PsbA, PsbB, PsbC, PsbD, PsbE, PsbF, PsbH, PsbI, PsbJ, PsbK, PsbL, PsbM, PsbT, PsbX, PsbY, PsbZ, Psb30/Ycf12, at least 3 peripheral proteins of the oxygen-evolving complex and a large number of cofactors. It forms dimeric complexes.

It is found in the plastid membrane. Its function is as follows. One of the components of the core complex of photosystem II (PSII). PSII is a light-driven water:plastoquinone oxidoreductase that uses light energy to abstract electrons from H(2)O, generating O(2) and a proton gradient subsequently used for ATP formation. It consists of a core antenna complex that captures photons, and an electron transfer chain that converts photonic excitation into a charge separation. This subunit is found at the monomer-monomer interface. This chain is Photosystem II reaction center protein M, found in Cuscuta reflexa (Southern Asian dodder).